Here is a 408-residue protein sequence, read N- to C-terminus: LL-diaminopimelate aminotransferase (408 aa).

2 residues coordinate substrate: Y15 and G42. Residues Y72, 108–109, Y132, N187, Y218, and 246–248 each bind pyridoxal 5'-phosphate; these read SK and SFS. Substrate is bound by residues K109, Y132, and N187. K249 is subject to N6-(pyridoxal phosphate)lysine. Residues R257 and N292 each coordinate pyridoxal 5'-phosphate. Substrate-binding residues include N292 and R388.

It belongs to the class-I pyridoxal-phosphate-dependent aminotransferase family. LL-diaminopimelate aminotransferase subfamily. As to quaternary structure, homodimer. The cofactor is pyridoxal 5'-phosphate.

It carries out the reaction (2S,6S)-2,6-diaminopimelate + 2-oxoglutarate = (S)-2,3,4,5-tetrahydrodipicolinate + L-glutamate + H2O + H(+). The protein operates within amino-acid biosynthesis; L-lysine biosynthesis via DAP pathway; LL-2,6-diaminopimelate from (S)-tetrahydrodipicolinate (aminotransferase route): step 1/1. Its function is as follows. Involved in the synthesis of meso-diaminopimelate (m-DAP or DL-DAP), required for both lysine and peptidoglycan biosynthesis. Catalyzes the direct conversion of tetrahydrodipicolinate to LL-diaminopimelate. The chain is LL-diaminopimelate aminotransferase from Prochlorococcus marinus (strain AS9601).